The chain runs to 628 residues: MEASRRSAVKPVIVLKPSKRFPLVEDTPGKASDALPLPLYLTNAVFFTLFFTVVYFLLSRWREKIRASIPLHAVTFPEIVAIFAFVASLIYLLGFFGIDFVQSLIIRPSGDVWSGEDYEEENEVLLHEEDARTVPCGQALDCSVPSLPHMARNVTAQRLFDEKPVRVATEEDARKVSCGQAVDCSLHSLPPRPPIVTSQKLFHEKTVIVTTEEDEEIIKSVVAGTLPSYSLESKLGDCKRAAAIRREALQRLTGRSLSGLPLDGFDYESILGQCCEMPVGYVQIPVGIAGPLLLNGREYSVPMATTEGCLVASTNRGCKAIHLSGGATSILLKDGMTRAPVVRFSTAKRAAELKFYLEDPENFDTLAVVFNRSSRFGRLQSIKCAIAGKNLYLRFTCSTGDAMGMNMVSKGVQNVLDFLQTDFPDMDVIGISGNFCSDKKPAAVNWIEGRGKSVVCEAIIEGDVVRKVLKTSVESLVELNMLKNLTGSAMAGALGGFNAHASNIVTAIYIATGQDPAQNVESSHCITMMEAVNDGKDLHISVTMPSIEVGTVGGGTQLASQSACLNLLGVKGASKDVAGANSRMLATIVTGAVLAGELSLMSALAAGQLVKSHMKYNRSSKDMSNLSS.

2 helical membrane-spanning segments follow: residues 38–58 and 78–98; these read PLYL…YFLL and EIVA…FFGI. A linker region spans residues 99–212; that stretch reads DFVQSLIIRP…HEKTVIVTTE (114 aa). Residue asparagine 153 is glycosylated (N-linked (GlcNAc...) asparagine). The interval 213 to 628 is catalytic; the sequence is EDEEIIKSVV…SSKDMSNLSS (416 aa). The active-site Charge relay system is the glutamate 307. N-linked (GlcNAc...) asparagine glycosylation occurs at asparagine 371. The active-site Charge relay system is the lysine 439. Asparagine 484 carries an N-linked (GlcNAc...) asparagine glycan. Residue aspartate 515 is the Charge relay system of the active site. Histidine 613 (proton donor) is an active-site residue. Asparagine 617 and asparagine 625 each carry an N-linked (GlcNAc...) asparagine glycan.

The protein belongs to the HMG-CoA reductase family.

It localises to the endoplasmic reticulum membrane. The protein localises to the mitochondrion membrane. The protein resides in the plastid membrane. The enzyme catalyses (R)-mevalonate + 2 NADP(+) + CoA = (3S)-3-hydroxy-3-methylglutaryl-CoA + 2 NADPH + 2 H(+). Its pathway is metabolic intermediate biosynthesis; (R)-mevalonate biosynthesis; (R)-mevalonate from acetyl-CoA: step 3/3. Functionally, catalyzes the synthesis of mevalonate. The specific precursor of all isoprenoid compounds present in plants. This chain is 3-hydroxy-3-methylglutaryl-coenzyme A reductase 2 (HMG2), found in Gossypium hirsutum (Upland cotton).